We begin with the raw amino-acid sequence, 25 residues long: Gamma-conotoxin PiVIIA (25 aa).

3 cysteine pairs are disulfide-bonded: cysteine 1/cysteine 15, cysteine 8/cysteine 19, and cysteine 14/cysteine 24. Residue proline 4 is modified to 4-hydroxyproline. Residues glutamate 13 and glutamate 20 each carry the 4-carboxyglutamate modification.

It belongs to the conotoxin O2 superfamily. Expressed by the venom duct.

The protein localises to the secreted. Functionally, micromolar concentrations of PiVIIA increase the magnitude of the macroscopic calcium current in DRG neurons from rat. An increase, even modest of the calcium current, may have a significant impact in the excitability and electrical activity of neurons, and may set up PiVIIA as a member of the pharmacological family of the gamma-conotoxins. The chain is Gamma-conotoxin PiVIIA from Conus princeps (Prince cone).